We begin with the raw amino-acid sequence, 57 residues long: Large ribosomal subunit protein bL32 (57 aa).

The segment covering 1–19 (MAVPKRRMSRSNTRSRRSQ) has biased composition (basic residues). Positions 1–22 (MAVPKRRMSRSNTRSRRSQWKA) are disordered.

This sequence belongs to the bacterial ribosomal protein bL32 family.

This chain is Large ribosomal subunit protein bL32, found in Rhodococcus jostii (strain RHA1).